The chain runs to 104 residues: L-rhamnose mutarotase (104 aa).

Y18 lines the substrate pocket. The Proton donor role is filled by H22. Substrate contacts are provided by residues Y41 and 76 to 77 (WW).

Belongs to the rhamnose mutarotase family. Homodimer.

The protein resides in the cytoplasm. It carries out the reaction alpha-L-rhamnose = beta-L-rhamnose. Its pathway is carbohydrate metabolism; L-rhamnose metabolism. In terms of biological role, involved in the anomeric conversion of L-rhamnose. The sequence is that of L-rhamnose mutarotase from Salmonella dublin (strain CT_02021853).